The sequence spans 106 residues: UPF0145 protein BH0643 (106 aa).

The protein belongs to the UPF0145 family.

The polypeptide is UPF0145 protein BH0643 (Halalkalibacterium halodurans (strain ATCC BAA-125 / DSM 18197 / FERM 7344 / JCM 9153 / C-125) (Bacillus halodurans)).